Reading from the N-terminus, the 145-residue chain is Brain and acute leukemia cytoplasmic protein (145 aa).

Residue Gly2 is the site of N-myristoyl glycine attachment. Residue Cys3 is the site of S-palmitoyl cysteine attachment. Positions Cys3–Ala35 are interaction with CAMK2A. Disordered regions lie at residues Leu36–Leu56 and Cys87–Glu109. A compositionally biased stretch (polar residues) spans Cys87–Leu105.

Interacts with CAMK2A. Post-translationally, palmitoylation and myristoylation target the protein to the lipid rafts. In terms of tissue distribution, at the mRNA level, predominantly expressed in the brain. At the protein level, mainly expressed in muscle tissues. In skeletal muscles, expressed in cranial and facial muscles, muscles of the neck, back, thoracic wall, and thigh. Also found in the contractile myoepithelial cell layer of salivary glands. In smooth muscles, expressed in the gastric wall, uterus, urinary bladder, as well as in the muscular lining around seminiferous tubules, prostatic ducts, epididymis, vas deferens, walls of small blood vessels in the dermis, and fascial layers between muscle fibers, brain, and around the spinal cord. Strongly expressed in myocardium. High expression levels are observed in placental spongiotrophoblast and adjacent myometrium. Also expressed in bone marrow hematopoietic cells. In the mature thymus, expressed in rare scattered cells. Weakly expressed in the brain neuropil, particularly near the hippocampus, and spinal cord white matter. Not detected in skin keratinocytes or lung (at protein level).

It localises to the cytoplasm. The protein resides in the synapse. It is found in the synaptosome. The protein localises to the membrane raft. Its subcellular location is the postsynaptic density. In terms of biological role, may play a synaptic role at the postsynaptic lipid rafts possibly through interaction with CAMK2A. The chain is Brain and acute leukemia cytoplasmic protein (Baalc) from Mus musculus (Mouse).